The chain runs to 562 residues: O-fucosyltransferase 4 (562 aa).

Residues 10–46 (SIQNRLPGSDHTTPSPPTSPHLCRSRSKSSSVSGQQQ) are disordered. The span at 37-46 (KSSSVSGQQQ) shows a compositional bias: low complexity. The chain crosses the membrane as a helical; Signal-anchor for type II membrane protein span at residues 67 to 87 (GILLFAPIIYISCMLFHLHAA). Residues Asn122, Asn146, Asn185, and Asn239 are each glycosylated (N-linked (GlcNAc...) asparagine). Substrate is bound at residue 332–334 (HLR). N-linked (GlcNAc...) asparagine glycans are attached at residues Asn404, Asn420, Asn450, and Asn555.

Belongs to the glycosyltransferase GT106 family.

Its subcellular location is the membrane. It participates in glycan metabolism. The chain is O-fucosyltransferase 4 from Arabidopsis thaliana (Mouse-ear cress).